A 212-amino-acid chain; its full sequence is Ras-related protein Rab-15 (212 aa).

Ser17, Gly18, Val19, Gly20, Lys21, Thr22, Cys23, Ser35, Ser39, and Thr40 together coordinate GTP. Position 22 (Thr22) interacts with Mg(2+). Short sequence motifs (switch) lie at residues 31–45 and 63–80; these read NEFH…GVDF and DTAG…YYRR. Mg(2+) contacts are provided by Thr40 and Asp63. GTP contacts are provided by Gly66, Asn121, Lys122, Asp124, Ser151, and Ala152. S-geranylgeranyl cysteine attachment occurs at residues Cys210 and Cys212. The residue at position 212 (Cys212) is a Cysteine methyl ester.

It belongs to the small GTPase superfamily. Rab family. As to quaternary structure, the GTP bound form of RAB15 interacts with REP15. Interacts (GTP-bound form) with MICAL1, MICAL3, MICALCL, EHBP1 and EHBP1L1. It depends on Mg(2+) as a cofactor. In terms of tissue distribution, expressed predominantly in neural tissues.

It localises to the cell membrane. The catalysed reaction is GTP + H2O = GDP + phosphate + H(+). Regulated by guanine nucleotide exchange factors (GEFs) which promote the exchange of bound GDP for free GTP. Regulated by GTPase activating proteins (GAPs) which increase the GTP hydrolysis activity. Inhibited by GDP dissociation inhibitors (GDIs). The small GTPases Rab are key regulators of intracellular membrane trafficking, from the formation of transport vesicles to their fusion with membranes. Rabs cycle between an inactive GDP-bound form and an active GTP-bound form that is able to recruit to membranes different sets of downstream effectors directly responsible for vesicle formation, movement, tethering and fusion. RAB15 may act in concert with RAB3A in regulating aspects of synaptic vesicle membrane flow within the nerve terminal. The polypeptide is Ras-related protein Rab-15 (Rattus norvegicus (Rat)).